A 109-amino-acid polypeptide reads, in one-letter code: Large ribosomal subunit protein uL22 (109 aa).

The protein belongs to the universal ribosomal protein uL22 family. As to quaternary structure, part of the 50S ribosomal subunit.

Its function is as follows. This protein binds specifically to 23S rRNA; its binding is stimulated by other ribosomal proteins, e.g. L4, L17, and L20. It is important during the early stages of 50S assembly. It makes multiple contacts with different domains of the 23S rRNA in the assembled 50S subunit and ribosome. The globular domain of the protein is located near the polypeptide exit tunnel on the outside of the subunit, while an extended beta-hairpin is found that lines the wall of the exit tunnel in the center of the 70S ribosome. The protein is Large ribosomal subunit protein uL22 of Laribacter hongkongensis (strain HLHK9).